The sequence spans 68 residues: MNPKLLIVIGLLLATGVCSFAKALDEESLRKECNHLNEPCDSDGDCCTSSEQCISTGSKYFCKGKQGP.

An N-terminal signal peptide occupies residues 1-23; the sequence is MNPKLLIVIGLLLATGVCSFAKA. Disulfide bonds link Cys33–Cys47, Cys40–Cys53, and Cys46–Cys62.

Belongs to the scorpion calcin-like family. As to expression, expressed by the venom gland. In intravenously injected mice, the labeled toxin has preference for heart, liver and lungs.

It localises to the secreted. The protein resides in the nucleus. Its function is as follows. Cell penetrating peptide (CPP) that increases intracellular calcium release through the activation of nuclear inositol 1,4,5-trisphosphate receptors (ITPR) of cardiomyocytes, thereby causing an increase in the contraction frequency of these cells. In vivo, this toxin is not lethal to mice, hovewer anti-CPP serum reduces venom lethality, suggesting that this toxin is lethal when it acts in synergy with other venom components. The chain is Intracellular calcium channel modulator CCP-Ts from Tityus serrulatus (Brazilian scorpion).